Here is a 328-residue protein sequence, read N- to C-terminus: Malate dehydrogenase (328 aa).

Residue 16–22 coordinates NAD(+); it reads GAAGQIS. Substrate is bound by residues Arg-97 and Arg-103. Residues Asn-110, Gln-117, and 134–136 contribute to the NAD(+) site; that span reads VGN. Substrate is bound by residues Asn-136 and Arg-167. The Proton acceptor role is filled by His-192.

It belongs to the LDH/MDH superfamily. MDH type 2 family.

It catalyses the reaction (S)-malate + NAD(+) = oxaloacetate + NADH + H(+). Catalyzes the reversible oxidation of malate to oxaloacetate. This chain is Malate dehydrogenase, found in Corynebacterium glutamicum (strain R).